Here is a 319-residue protein sequence, read N- to C-terminus: Probable cytochrome c oxidase subunit 2 (319 aa).

Positions 1 to 33 are cleaved as a signal peptide; it reads MSPNGSDRSPRRPMRRKLLQALTAGLVLATATG. 2 consecutive transmembrane segments (helical) span residues 63–83 and 101–121; these read WAAA…ATIF and MPIE…LFYF. Cu cation-binding residues include His227, Cys262, Cys266, and His270.

It belongs to the cytochrome c oxidase subunit 2 family. The cofactor is Cu cation. It depends on heme as a cofactor.

The protein resides in the cell membrane. It catalyses the reaction 4 Fe(II)-[cytochrome c] + O2 + 8 H(+)(in) = 4 Fe(III)-[cytochrome c] + 2 H2O + 4 H(+)(out). Its function is as follows. Subunits I and II form the functional core of the enzyme complex. Electrons originating in cytochrome c are transferred via heme a and Cu(A) to the binuclear center formed by heme a3 and Cu(B). This is Probable cytochrome c oxidase subunit 2 (ctaC) from Streptomyces avermitilis (strain ATCC 31267 / DSM 46492 / JCM 5070 / NBRC 14893 / NCIMB 12804 / NRRL 8165 / MA-4680).